Here is a 505-residue protein sequence, read N- to C-terminus: MDPGNENSATEAAAIIDLDPDFEPQSRPRSCTWPLPRPEIANQPSEPPEVEPDLGEKVHTEGRSEPILLPSRLPEPAGGPQPGILGAVTGPRKGGSRRNAWGNQSYAELISQAIESAPEKRLTLAQIYEWMVRTVPYFKDKGDSNSSAGWKNSIRHNLSLHSKFIKVHNEATGKSSWWMLNPEGGKSGKAPRRRAASMDSSSKLLRGRSKAPKKKPSVLPAPPEGATPTSPVGHFAKWSGSPCSRNREEADMWTTFRPRSSSNASSVSTRLSPLRPESEVLAEEIPASVSSYAGGVPPTLNEGLELLDGLNLTSSHSLLSRSGLSGFSLQHPGVTGPLHTYSSSLFSPAEGPLSAGEGCFSSSQALEALLTSDTPPPPADVLMTQVDPILSQAPTLLLLGGLPSSSKLATGVGLCPKPLEAPGPSSLVPTLSMIAPPPVMASAPIPKALGTPVLTPPTEAASQDRMPQDLDLDMYMENLECDMDNIISDLMDEGEGLDFNFEPDP.

Over residues 1–10 (MDPGNENSAT) the composition is skewed to polar residues. 2 disordered regions span residues 1 to 100 (MDPG…RRNA) and 176 to 246 (SWWM…CSRN). The residue at position 32 (Thr-32) is a Phosphothreonine; by PKB/AKT1. The segment covering 54 to 64 (LGEKVHTEGRS) has biased composition (basic and acidic residues). Residues 100–188 (AWGNQSYAEL…MLNPEGGKSG (89 aa)) constitute a DNA-binding region (fork-head). Residue Ser-197 is modified to Phosphoserine; by PKB/AKT1. The segment covering 205–216 (LRGRSKAPKKKP) has biased composition (basic residues). Ser-262 is subject to Phosphoserine; by PKB/AKT1.

As to quaternary structure, interacts with CREBBP/CBP, CTNNB1, MYOCD, SIRT1, SRF and YWHAZ. Acetylated by CREBBP/CBP and deacetylated by SIRT1. Binding of YWHAZ inhibits DNA-binding. Interacts with USP7; the interaction is enhanced in presence of hydrogen peroxide and occurs independently of TP53. Interacts with NLK, and this inhibits monoubiquitination and transcriptional activity. Interacts with FOXK1; the interaction inhibits MEF2C transactivation activity. Post-translationally, acetylation by CREBBP/CBP, which is induced by peroxidase stress, inhibits transcriptional activity. Deacetylation by SIRT1 is NAD-dependent and stimulates transcriptional activity. In terms of processing, phosphorylation by PKB/AKT1 inhibits transcriptional activity and is responsible for cytoplasmic localization. May be phosphorylated at multiple sites by NLK. Monoubiquitinated; monoubiquitination is induced by oxidative stress and reduced by deacetylase inhibitors; results in its relocalization to the nucleus and its increased transcriptional activity. Deubiquitinated by USP7; deubiquitination is induced by oxidative stress; enhances its interaction with USP7 and consequently, deubiquitination; increases its translocation to the cytoplasm and inhibits its transcriptional activity. Hydrogene-peroxide-induced ubiquitination and USP7-mediated deubiquitination have no major effect on its protein stability. In terms of tissue distribution, heart, brain, placenta, lung, liver, skeletal muscle, kidney and pancreas. Isoform zeta is most abundant in the liver, kidney, and pancreas.

It localises to the cytoplasm. Its subcellular location is the nucleus. Transcription factor involved in the regulation of the insulin signaling pathway. Binds to insulin-response elements (IREs) and can activate transcription of IGFBP1. Down-regulates expression of HIF1A and suppresses hypoxia-induced transcriptional activation of HIF1A-modulated genes. Also involved in negative regulation of the cell cycle. Involved in increased proteasome activity in embryonic stem cells (ESCs) by activating expression of PSMD11 in ESCs, leading to enhanced assembly of the 26S proteasome, followed by higher proteasome activity. The polypeptide is Forkhead box protein O4 (FOXO4) (Homo sapiens (Human)).